A 4870-amino-acid chain; its full sequence is Malformin synthetase mlfA (4870 aa).

Positions 106-497 are adenylation 1; that stretch reads ERRAANRPHS…CGRADTQVKL (392 aa). A Carrier 1 domain is found at 635–711; the sequence is LGLSQLEQEI…EASSLAEVQE (77 aa). Ser672 bears the O-(pantetheine 4'-phosphoryl)serine mark. The condensation 1 stretch occupies residues 749 to 1133; it reads EDVFPCTTMQ…ALNTLTLLQA (385 aa). Residues 1161–1550 are adenylation 2; sequence DRWVTRQPES…GRKDTQVKLR (390 aa). Positions 1688 to 1765 constitute a Carrier 2 domain; sequence TASSKLELTL…QLAAILGEAT (78 aa). Ser1725 is subject to O-(pantetheine 4'-phosphoryl)serine. 2 disordered regions span residues 1764–1794 and 1829–1859; these read ATGQ…NDGV and GSSS…VSPV. 2 stretches are compositionally biased toward low complexity: residues 1769–1792 and 1830–1846; these read ESSA…STND and SSSC…SSSS. The condensation 2 stretch occupies residues 1898–2313; it reads EDIYPATALQ…GVSYRDKQTL (416 aa). The adenylation 3 stretch occupies residues 2336–2728; that stretch reads VRTPHAPAVF…IGRRDGQLKL (393 aa). One can recognise a Carrier 3 domain in the interval 2864-2940; the sequence is RPATAQEREM…QLMRHLSANG (77 aa). Ser2901 is modified (O-(pantetheine 4'-phosphoryl)serine). 2 condensation regions span residues 2957-3422 and 3443-3862; these read WVPL…TYDQ and DIYP…EQLV. Residues 3887–4277 are adenylation 4; sequence HSSREAACAW…VGRKDNQIKF (391 aa). A Carrier 4 domain is found at 4411-4487; that stretch reads MPFTAAECKM…DLAYRTANLV (77 aa). Ser4448 bears the O-(pantetheine 4'-phosphoryl)serine mark. Residues 4524–4837 are condensation 5; that stretch reads EVLPTTSFQR…LQTIVQHQNN (314 aa).

The protein belongs to the NRP synthetase family.

The protein operates within secondary metabolite biosynthesis. Its function is as follows. Nonribosomal peptide synthetase; part of the gene cluster that mediates the biosynthesis of malformins, cyclic pentapeptides with a disulfide bond between 2 consecutive cysteins, that show potential anti-tumor as well as antimalarial and antitrypanosomal properties. The nonribosomal peptide synthetase mlfA is responsible of the formation of the cyclic pentapeptide. The malformin biosynthesis clusters in malformin-producing fungi also contain enzymes involved in the formation of the disulfide bond between the two consecutive cysteins within malformins, in addition to additional tailoring enzymes such as methyltransferases or oxidoreductases. They are also composed of up to 4 major facilitator superfamily transporters, and transcription factors probably involved in the regulation of the expression of those clusters. This is Malformin synthetase mlfA from Aspergillus niger (strain ATCC 1015 / CBS 113.46 / FGSC A1144 / LSHB Ac4 / NCTC 3858a / NRRL 328 / USDA 3528.7).